We begin with the raw amino-acid sequence, 466 residues long: Replicative helicase loading/DNA remodeling protein DnaB (466 aa).

The tract at residues 3–113 (RQAFEFGLRP…ETQFVYQLIQ (111 aa)) is DDBH1. The segment at 200-292 (EMLRQMLGKH…TSSSAGKSSE (93 aa)) is DDBH2-1. Residues 293–401 (VNPKPQSDEW…QPKNEGSSGN (109 aa)) form a DDBH2-2 region.

This sequence belongs to the DnaB/DnaD family. Homotetramer, higher-order oligomers are induced by ssDNA. The DNA replisome assembles sequentially on oriC in this order; DnaA, DnaD, DnaB, DnaI-DnaC helicase. Part of the replication restart primosome, PriA binds first, then DnaD and subsequently DnaB bind.

Its function is as follows. Helps DnaI load the DnaC replicative helicase onto single-stranded (ss)DNA. During DNA replication from the origin of replication (oriC) in the DNA replisome, DnaB and DnaD are required after DnaA and before subsequent helicase DnaC loading. Component of the replication restart primosome, which reloads the replicative helicase on sites other than oriC. Essential for replication initiation of the chromosome and plasmids. Remodels DNA, laterally compacts supercoiled plasmid and linear DNA. Binds supercoiled, nicked and linear double-stranded (ds)DNA and phage phiX174 single-stranded (ss)DNA; phiX174 ssDNA is a better substrate than for B.subtilis. No binding to phage M13 ssDNA although it induces oligomers. The polypeptide is Replicative helicase loading/DNA remodeling protein DnaB (Staphylococcus aureus (strain NCTC 8325 / PS 47)).